Here is a 277-residue protein sequence, read N- to C-terminus: Glutamate racemase (277 aa).

Substrate contacts are provided by residues 25 to 26 and 57 to 58; these read DS and YG. Cysteine 89 serves as the catalytic Proton donor/acceptor. 90–91 contributes to the substrate binding site; it reads NT. Cysteine 204 serves as the catalytic Proton donor/acceptor. 205–206 serves as a coordination point for substrate; it reads TH.

Belongs to the aspartate/glutamate racemases family.

The enzyme catalyses L-glutamate = D-glutamate. It functions in the pathway cell wall biogenesis; peptidoglycan biosynthesis. Provides the (R)-glutamate required for cell wall biosynthesis. The protein is Glutamate racemase of Brucella ovis (strain ATCC 25840 / 63/290 / NCTC 10512).